Here is a 214-residue protein sequence, read N- to C-terminus: Adenylate kinase (214 aa).

10-15 serves as a coordination point for ATP; the sequence is GAGKGT. Residues 30 to 59 form an NMP region; sequence STGDMLRAAIKAGTELGKQAKAVIDAGQLV. AMP contacts are provided by residues threonine 31, arginine 36, 57-59, 85-88, and glutamine 92; these read QLV and GFPR. Residues 122-159 are LID; it reads GRRAHLPSGRTYHVVYNPPKVEGKDDVTGEDLVVRDDD. ATP-binding positions include arginine 123 and 132–133; that span reads TY. Arginine 156 and arginine 167 together coordinate AMP. Lysine 200 contacts ATP.

Belongs to the adenylate kinase family. Monomer.

It is found in the cytoplasm. The catalysed reaction is AMP + ATP = 2 ADP. It participates in purine metabolism; AMP biosynthesis via salvage pathway; AMP from ADP: step 1/1. Functionally, catalyzes the reversible transfer of the terminal phosphate group between ATP and AMP. Plays an important role in cellular energy homeostasis and in adenine nucleotide metabolism. In Vibrio vulnificus (strain CMCP6), this protein is Adenylate kinase.